Reading from the N-terminus, the 644-residue chain is Biosynthetic arginine decarboxylase (644 aa).

Position 113 is an N6-(pyridoxal phosphate)lysine (Lys113). 293-303 (FDVGGGLGVDY) is a binding site for substrate.

Belongs to the Orn/Lys/Arg decarboxylase class-II family. SpeA subfamily. It depends on Mg(2+) as a cofactor. The cofactor is pyridoxal 5'-phosphate.

It carries out the reaction L-arginine + H(+) = agmatine + CO2. Functionally, catalyzes the biosynthesis of agmatine from arginine. This is Biosynthetic arginine decarboxylase from Pasteurella multocida (strain Pm70).